A 119-amino-acid chain; its full sequence is Large ribosomal subunit protein bL20 (119 aa).

The protein belongs to the bacterial ribosomal protein bL20 family.

Binds directly to 23S ribosomal RNA and is necessary for the in vitro assembly process of the 50S ribosomal subunit. It is not involved in the protein synthesizing functions of that subunit. The sequence is that of Large ribosomal subunit protein bL20 from Bradyrhizobium sp. (strain ORS 278).